Consider the following 463-residue polypeptide: Cysteine--tRNA ligase (463 aa).

Cys-29 is a binding site for Zn(2+). A 'HIGH' region motif is present at residues Met-31–His-41. Positions 218, 243, and 247 each coordinate Zn(2+). The short motif at Lys-275–Ser-279 is the 'KMSKS' region element. Residue Lys-278 coordinates ATP.

The protein belongs to the class-I aminoacyl-tRNA synthetase family. As to quaternary structure, monomer. The cofactor is Zn(2+).

Its subcellular location is the cytoplasm. It carries out the reaction tRNA(Cys) + L-cysteine + ATP = L-cysteinyl-tRNA(Cys) + AMP + diphosphate. The protein is Cysteine--tRNA ligase of Polaromonas naphthalenivorans (strain CJ2).